Consider the following 442-residue polypeptide: Pentatricopeptide repeat-containing protein At2g27800, mitochondrial (442 aa).

The N-terminal 67 residues, 1–67 (MSATRSTFLG…SFLPSIHVRF (67 aa)), are a transit peptide targeting the mitochondrion. PPR repeat units follow at residues 206–236 (NENL…MVTS), 244–286 (TIRT…GIEP), 287–322 (DVFA…DCEP), 323–357 (NSFT…GFVP), 358–392 (NGKS…GRVV), and 393–427 (DFIS…QLVD).

The protein belongs to the PPR family. P subfamily.

Its subcellular location is the mitochondrion. This chain is Pentatricopeptide repeat-containing protein At2g27800, mitochondrial, found in Arabidopsis thaliana (Mouse-ear cress).